A 306-amino-acid chain; its full sequence is Dirigent protein 24 (306 aa).

The N-terminal stretch at methionine 1–serine 21 is a signal peptide. The tract at residues proline 36–proline 61 is disordered.

The protein belongs to the plant dirigent protein family. In terms of assembly, homodimer.

It localises to the secreted. Its subcellular location is the extracellular space. It is found in the apoplast. In terms of biological role, dirigent proteins impart stereoselectivity on the phenoxy radical-coupling reaction, yielding optically active lignans from two molecules of coniferyl alcohol in the biosynthesis of lignans, flavonolignans, and alkaloids and thus plays a central role in plant secondary metabolism. The protein is Dirigent protein 24 (DIR24) of Arabidopsis thaliana (Mouse-ear cress).